The primary structure comprises 180 residues: Thioredoxin 3 (180 aa).

The Cytoplasmic portion of the chain corresponds to Met1–Leu3. A helical; Signal-anchor for type II membrane protein membrane pass occupies residues Ile4–Ile24. The Lumenal portion of the chain corresponds to Asn25–Lys180. A Thioredoxin domain is found at Ser29 to Leu176. Catalysis depends on nucleophile residues Cys99 and Cys102. Residues Cys99 and Cys102 are joined by a disulfide bond.

This sequence belongs to the thioredoxin family. Post-translationally, the disulfide bond between Cys-99 and Cys-102 acts as a redox-active center and is reduced by thioredoxin reductase TRXR.

The protein resides in the endoplasmic reticulum membrane. Its function is as follows. Participates in various redox reactions through the reversible oxidation of its active center dithiol to a disulfide and catalyzes dithiol-disulfide exchange reactions. This Plasmodium falciparum (isolate 3D7) protein is Thioredoxin 3.